Reading from the N-terminus, the 594-residue chain is Potassium-transporting ATPase potassium-binding subunit (594 aa).

A run of 10 helical transmembrane segments spans residues 3–23, 67–87, 136–156, 179–199, 287–307, 314–334, 415–435, 453–473, 519–539, and 562–582; these read ADFL…APLL, AVAM…LQRL, ALTV…IALV, LYVL…QGVV, LEML…GEMV, VAIL…AAYF, GLYG…LMIG, VALV…VAVL, VLLG…ILAL, and LFVA…YVPA.

Belongs to the KdpA family. The system is composed of three essential subunits: KdpA, KdpB and KdpC.

Its subcellular location is the cell inner membrane. Its function is as follows. Part of the high-affinity ATP-driven potassium transport (or Kdp) system, which catalyzes the hydrolysis of ATP coupled with the electrogenic transport of potassium into the cytoplasm. This subunit binds the periplasmic potassium ions and delivers the ions to the membrane domain of KdpB through an intramembrane tunnel. The chain is Potassium-transporting ATPase potassium-binding subunit from Bordetella pertussis (strain Tohama I / ATCC BAA-589 / NCTC 13251).